The sequence spans 124 residues: Apolipoprotein C-IV (124 aa).

The signal sequence occupies residues 1 to 27 (MSLLRCRQQTLPSLCLSVLFLACFVAS).

The protein belongs to the apolipoprotein C4 family.

It is found in the secreted. Functionally, may participate in lipoprotein metabolism. This chain is Apolipoprotein C-IV (Apoc4), found in Rattus norvegicus (Rat).